Consider the following 166-residue polypeptide: 3-isopropylmalate dehydratase small subunit (166 aa).

This sequence belongs to the LeuD family. LeuD type 2 subfamily. In terms of assembly, heterodimer of LeuC and LeuD.

The enzyme catalyses (2R,3S)-3-isopropylmalate = (2S)-2-isopropylmalate. It participates in amino-acid biosynthesis; L-leucine biosynthesis; L-leucine from 3-methyl-2-oxobutanoate: step 2/4. In terms of biological role, catalyzes the isomerization between 2-isopropylmalate and 3-isopropylmalate, via the formation of 2-isopropylmaleate. The chain is 3-isopropylmalate dehydratase small subunit from Aliarcobacter butzleri (strain RM4018) (Arcobacter butzleri).